A 246-amino-acid chain; its full sequence is Acetoacetate decarboxylase (246 aa).

Catalysis depends on Lys-116, which acts as the Schiff-base intermediate with acetoacetate.

The protein belongs to the ADC family.

The enzyme catalyses acetoacetate + H(+) = acetone + CO2. Functionally, catalyzes the conversion of acetoacetate to acetone and carbon dioxide. The sequence is that of Acetoacetate decarboxylase from Burkholderia cenocepacia (strain HI2424).